Here is a 243-residue protein sequence, read N- to C-terminus: 3-deoxy-manno-octulosonate cytidylyltransferase (243 aa).

This sequence belongs to the KdsB family.

It is found in the cytoplasm. It carries out the reaction 3-deoxy-alpha-D-manno-oct-2-ulosonate + CTP = CMP-3-deoxy-beta-D-manno-octulosonate + diphosphate. It functions in the pathway nucleotide-sugar biosynthesis; CMP-3-deoxy-D-manno-octulosonate biosynthesis; CMP-3-deoxy-D-manno-octulosonate from 3-deoxy-D-manno-octulosonate and CTP: step 1/1. It participates in bacterial outer membrane biogenesis; lipopolysaccharide biosynthesis. In terms of biological role, activates KDO (a required 8-carbon sugar) for incorporation into bacterial lipopolysaccharide in Gram-negative bacteria. The chain is 3-deoxy-manno-octulosonate cytidylyltransferase from Bartonella tribocorum (strain CIP 105476 / IBS 506).